We begin with the raw amino-acid sequence, 96 residues long: UPF0235 protein PC1_3453 (96 aa).

It belongs to the UPF0235 family.

The protein is UPF0235 protein PC1_3453 of Pectobacterium carotovorum subsp. carotovorum (strain PC1).